A 302-amino-acid chain; its full sequence is Probable histone acetyltransferase Rv0428c (302 aa).

It carries out the reaction L-lysyl-[histone] + acetyl-CoA = N(6)-acetyl-L-lysyl-[histone] + CoA + H(+). Shows histone acetyl transferase (HAT) activity with recombinant eukaryotic H3 histone expressed in bacteria as substrate and acetyl-CoA as donor. May be involved in survival under stress conditions. The protein is Probable histone acetyltransferase Rv0428c of Mycobacterium tuberculosis (strain ATCC 25618 / H37Rv).